Reading from the N-terminus, the 206-residue chain is Thiamine-phosphate synthase (206 aa).

4-amino-2-methyl-5-(diphosphooxymethyl)pyrimidine contacts are provided by residues 36–40 (QLRMK) and asparagine 68. Residues aspartate 69 and aspartate 88 each coordinate Mg(2+). Serine 106 contacts 4-amino-2-methyl-5-(diphosphooxymethyl)pyrimidine. 132 to 134 (TNT) contributes to the 2-[(2R,5Z)-2-carboxy-4-methylthiazol-5(2H)-ylidene]ethyl phosphate binding site. Lysine 135 contributes to the 4-amino-2-methyl-5-(diphosphooxymethyl)pyrimidine binding site. 2-[(2R,5Z)-2-carboxy-4-methylthiazol-5(2H)-ylidene]ethyl phosphate is bound by residues glycine 162 and 182 to 183 (VS).

It belongs to the thiamine-phosphate synthase family. Mg(2+) is required as a cofactor.

The catalysed reaction is 2-[(2R,5Z)-2-carboxy-4-methylthiazol-5(2H)-ylidene]ethyl phosphate + 4-amino-2-methyl-5-(diphosphooxymethyl)pyrimidine + 2 H(+) = thiamine phosphate + CO2 + diphosphate. The enzyme catalyses 2-(2-carboxy-4-methylthiazol-5-yl)ethyl phosphate + 4-amino-2-methyl-5-(diphosphooxymethyl)pyrimidine + 2 H(+) = thiamine phosphate + CO2 + diphosphate. It catalyses the reaction 4-methyl-5-(2-phosphooxyethyl)-thiazole + 4-amino-2-methyl-5-(diphosphooxymethyl)pyrimidine + H(+) = thiamine phosphate + diphosphate. Its pathway is cofactor biosynthesis; thiamine diphosphate biosynthesis; thiamine phosphate from 4-amino-2-methyl-5-diphosphomethylpyrimidine and 4-methyl-5-(2-phosphoethyl)-thiazole: step 1/1. Functionally, condenses 4-methyl-5-(beta-hydroxyethyl)thiazole monophosphate (THZ-P) and 2-methyl-4-amino-5-hydroxymethyl pyrimidine pyrophosphate (HMP-PP) to form thiamine monophosphate (TMP). This chain is Thiamine-phosphate synthase, found in Methanococcus vannielii (strain ATCC 35089 / DSM 1224 / JCM 13029 / OCM 148 / SB).